Consider the following 188-residue polypeptide: ATP synthase subunit b (188 aa).

Residues 7–26 (TAAAGAMTLFFASMAYASGD) form a helical membrane-spanning segment.

The protein belongs to the ATPase B chain family. As to quaternary structure, F-type ATPases have 2 components, F(1) - the catalytic core - and F(0) - the membrane proton channel. F(1) has five subunits: alpha(3), beta(3), gamma(1), delta(1), epsilon(1). F(0) has three main subunits: a(1), b(2) and c(10-14). The alpha and beta chains form an alternating ring which encloses part of the gamma chain. F(1) is attached to F(0) by a central stalk formed by the gamma and epsilon chains, while a peripheral stalk is formed by the delta and b chains.

The protein localises to the cell inner membrane. Its function is as follows. F(1)F(0) ATP synthase produces ATP from ADP in the presence of a proton or sodium gradient. F-type ATPases consist of two structural domains, F(1) containing the extramembraneous catalytic core and F(0) containing the membrane proton channel, linked together by a central stalk and a peripheral stalk. During catalysis, ATP synthesis in the catalytic domain of F(1) is coupled via a rotary mechanism of the central stalk subunits to proton translocation. Functionally, component of the F(0) channel, it forms part of the peripheral stalk, linking F(1) to F(0). The protein is ATP synthase subunit b of Nitratidesulfovibrio vulgaris (strain DP4) (Desulfovibrio vulgaris).